A 219-amino-acid polypeptide reads, in one-letter code: Adenylate kinase (219 aa).

Position 10–15 (G10–T15) interacts with ATP. Residues S30–V59 are NMP. Residues T31, R36, E57–V59, G85–R88, and Q92 each bind AMP. The tract at residues G122 to D159 is LID. Residues R123 and V132–Y133 contribute to the ATP site. The interval S129 to P152 is disordered. Residues Y133–P152 are compositionally biased toward basic and acidic residues. AMP-binding residues include R156 and R167. Residue G203 coordinates ATP.

The protein belongs to the adenylate kinase family. As to quaternary structure, monomer.

The protein localises to the cytoplasm. The catalysed reaction is AMP + ATP = 2 ADP. It participates in purine metabolism; AMP biosynthesis via salvage pathway; AMP from ADP: step 1/1. Functionally, catalyzes the reversible transfer of the terminal phosphate group between ATP and AMP. Plays an important role in cellular energy homeostasis and in adenine nucleotide metabolism. The polypeptide is Adenylate kinase (Alkalilimnicola ehrlichii (strain ATCC BAA-1101 / DSM 17681 / MLHE-1)).